A 323-amino-acid polypeptide reads, in one-letter code: MKLKMLLLSSTPPGSPGGQADTNTTPATPTTSTTAVDSTSRQLTTSKQPQQTETRGRRYGRRPSSKSRRSQTQQRRSRSRHRSRSRSRSRSKSQTHTTRSTTRSRSTSLTKTRALTSRSRSRGRSPTTCRRGGGRSPRRRSRSPSTSSSCTTQRSQRARAESSTTRGARGSRGSRGGSRGGRGRRRGRSSSSSSPAHKRSRGGSAKLRGVSPGEVGGSLRSVSSKHTGRLGRLLEEARDPPVIIVKGAANTLKCFRNRAKIKYMGLFRSFSTTWSWVAGDGTERLGRPRMLISFSSYTQRRDFDEAVRYPKGVDKAYGNLDSL.

The interval 1–233 (MKLKMLLLSS…SKHTGRLGRL (233 aa)) is disordered. Residues 20-40 (ADTNTTPATPTTSTTAVDSTS) show a composition bias toward low complexity. The span at 41 to 53 (RQLTTSKQPQQTE) shows a compositional bias: polar residues. The segment covering 57 to 93 (RRYGRRPSSKSRRSQTQQRRSRSRHRSRSRSRSRSKS) has biased composition (basic residues). The segment covering 94-130 (QTHTTRSTTRSRSTSLTKTRALTSRSRSRGRSPTTCR) has biased composition (low complexity). Positions 132–142 (GGGRSPRRRSR) are enriched in basic residues. Low complexity predominate over residues 143 to 155 (SPSTSSSCTTQRS).

This sequence belongs to the papillomaviridae E8^E2C protein family.

Its subcellular location is the host nucleus. Functionally, plays a role in limiting the replication of viral DNA in keratinocytes. Recruits the host NCoR/SMRT complex to viral replication foci to mediate repression of both viral replication and transcription. The sequence is that of Protein E8^E2C from Homo sapiens (Human).